The following is a 912-amino-acid chain: Protein translocase subunit SecA (912 aa).

Residues Q87, 105–109 (GEGKT), and D509 each bind ATP. A compositionally biased stretch (basic and acidic residues) spans 847–859 (RERAVSQPVHEDA). Residues 847–912 (RERAVSQPVH…KYKHCHGKLN (66 aa)) form a disordered region. Acidic residues predominate over residues 867–878 (AESEEASGESAD). The span at 881-892 (QPVRRDGPKVGR) shows a compositional bias: basic and acidic residues. Zn(2+) is bound by residues C896, C898, C907, and H908. The span at 902–912 (KKYKHCHGKLN) shows a compositional bias: basic residues.

The protein belongs to the SecA family. In terms of assembly, monomer and homodimer. Part of the essential Sec protein translocation apparatus which comprises SecA, SecYEG and auxiliary proteins SecDF-YajC and YidC. It depends on Zn(2+) as a cofactor.

The protein localises to the cell inner membrane. The protein resides in the cytoplasm. The catalysed reaction is ATP + H2O + cellular proteinSide 1 = ADP + phosphate + cellular proteinSide 2.. In terms of biological role, part of the Sec protein translocase complex. Interacts with the SecYEG preprotein conducting channel. Has a central role in coupling the hydrolysis of ATP to the transfer of proteins into and across the cell membrane, serving both as a receptor for the preprotein-SecB complex and as an ATP-driven molecular motor driving the stepwise translocation of polypeptide chains across the membrane. In Chromohalobacter salexigens (strain ATCC BAA-138 / DSM 3043 / CIP 106854 / NCIMB 13768 / 1H11), this protein is Protein translocase subunit SecA.